Reading from the N-terminus, the 543-residue chain is ADIPOR-like receptor IZH3 (543 aa).

Over 1 to 259 (MMDSSSKSLT…NWYGWHNETS (259 aa)) the chain is Lumenal. N-linked (GlcNAc...) asparagine glycosylation is found at Asn45, Asn123, Asn153, and Asn256. Residues 260–280 (NIWSHLLGAIYIIYLAIYDFP) form a helical membrane-spanning segment. Topologically, residues 281-295 (QSEVWRNSQVPPQAR) are cytoplasmic. A helical membrane pass occupies residues 296–316 (WIVFMFLAAALKCMLSSVFWH). The Lumenal portion of the chain corresponds to 317-330 (TFNGTSFLKLRSKF). Asn319 carries N-linked (GlcNAc...) asparagine glycosylation. A helical membrane pass occupies residues 331-353 (ACVDYSGITILITASILTTEFVT). Over 354–357 (MYSC) the chain is Cytoplasmic. A helical membrane pass occupies residues 358–378 (YWAMYTYMSISLALGVFGVFM). Residues 379-395 (NWSPRFDRPEARPLRIR) lie on the Lumenal side of the membrane. A helical transmembrane segment spans residues 396 to 416 (FFILLATMGVLSFLHLIFLTD). Residues 417–425 (LHYAATLFS) lie on the Cytoplasmic side of the membrane. The chain crosses the membrane as a helical span at residues 426 to 446 (PVTYKSVVWYLVGVVFYGSFI). At 447-505 (PERFRSDVQVDKTIPTNYELSTDLEIITKQREIHFREVPTAHSKCSSCPSHAKSFKSLW) the chain is on the lumenal side. A helical membrane pass occupies residues 506–526 (WVDYFGCSHTFWHFFVVLGVI). At 527–543 (GHYRAILDMFAKRWILS) the chain is on the cytoplasmic side.

This sequence belongs to the ADIPOR family.

It localises to the endoplasmic reticulum membrane. Functionally, ADIPOR-like receptor involved in zinc metabolism either by altering membrane sterol content or by directly altering cellular zinc levels. The sequence is that of ADIPOR-like receptor IZH3 (IZH3) from Saccharomyces cerevisiae (strain ATCC 204508 / S288c) (Baker's yeast).